The chain runs to 436 residues: GTPase Obg (436 aa).

In terms of domain architecture, Obg spans 2-160 (SMFLDTAKIQ…RELLLELKVL (159 aa)). One can recognise an OBG-type G domain in the interval 161-338 (ADVGLVGFPS…LLDATAELLD (178 aa)). GTP-binding positions include 167-174 (GFPSVGKS), 192-196 (FTTIV), 214-217 (DLPG), 284-287 (NKMD), and 319-321 (SSL). Mg(2+) is bound by residues serine 174 and threonine 194. One can recognise an OCT domain in the interval 358-436 (GFDEEAPAFE…IGKFEFEFVD (79 aa)).

It belongs to the TRAFAC class OBG-HflX-like GTPase superfamily. OBG GTPase family. Monomer. It depends on Mg(2+) as a cofactor.

The protein resides in the cytoplasm. Functionally, an essential GTPase which binds GTP, GDP and possibly (p)ppGpp with moderate affinity, with high nucleotide exchange rates and a fairly low GTP hydrolysis rate. Plays a role in control of the cell cycle, stress response, ribosome biogenesis and in those bacteria that undergo differentiation, in morphogenesis control. This is GTPase Obg from Streptococcus sanguinis (strain SK36).